The following is a 202-amino-acid chain: MQPEYRPHIYLASNSPRRRELLDRIGVHYAWMDPGVDEVLGEDESPEVFVLRIALEKARAGYRSLQEDPERELLPVMGADTVVVLDNELLGKPRGREHGLEMLQSLSGTTHRVLTGVALVDDREATRLSVSHVTFRELERAEIERYWATGEPQDKAGGYAIQGRAAVFVEHLEGSYSGVMGLPLFEAAQLLDEFEIDYQRHW.

The active-site Proton acceptor is aspartate 80.

Belongs to the Maf family. YhdE subfamily. Requires a divalent metal cation as cofactor.

The protein resides in the cytoplasm. The catalysed reaction is dTTP + H2O = dTMP + diphosphate + H(+). The enzyme catalyses UTP + H2O = UMP + diphosphate + H(+). Its function is as follows. Nucleoside triphosphate pyrophosphatase that hydrolyzes dTTP and UTP. May have a dual role in cell division arrest and in preventing the incorporation of modified nucleotides into cellular nucleic acids. This Alkalilimnicola ehrlichii (strain ATCC BAA-1101 / DSM 17681 / MLHE-1) protein is dTTP/UTP pyrophosphatase.